We begin with the raw amino-acid sequence, 120 residues long: uncharacterized protein (120 aa).

It to B.subtilis XkdH.

This is an uncharacterized protein from Bacillus subtilis (strain 168).